A 118-amino-acid polypeptide reads, in one-letter code: Large ribosomal subunit protein bL20 (118 aa).

It belongs to the bacterial ribosomal protein bL20 family.

Its function is as follows. Binds directly to 23S ribosomal RNA and is necessary for the in vitro assembly process of the 50S ribosomal subunit. It is not involved in the protein synthesizing functions of that subunit. In Ralstonia nicotianae (strain ATCC BAA-1114 / GMI1000) (Ralstonia solanacearum), this protein is Large ribosomal subunit protein bL20.